A 259-amino-acid chain; its full sequence is UPF0246 protein PSPPH_1119 (259 aa).

Belongs to the UPF0246 family.

This Pseudomonas savastanoi pv. phaseolicola (strain 1448A / Race 6) (Pseudomonas syringae pv. phaseolicola (strain 1448A / Race 6)) protein is UPF0246 protein PSPPH_1119.